Reading from the N-terminus, the 304-residue chain is MSVNGENKVSGGDSSSSDRPVRVYADGIFDLFHFGHARAIEQAKKSFPNTYLLVGCCNDEITNKFKGKTVMTESERYESLRHCKWVDEVIPDAPWVLTTEFLDKHKIDYVAHDALPYADTSGAGNDVYEFVKSIGKFKETKRTEGISTSDIIMRIVKDYNQYVLRNLDRGYSREELGVSFEEKRLRVNMRLKKLQEKVKEQQEKIQTVAKTAGMHHDEWLENADRWVAGFLEMFEEGCHKMGTAIRDGIQQRLMRQESEENRRLLQNGLTISKDNDDEQMSDDNEFAEEDCVNVSNKGIETVKK.

CTP is bound by residues 28–36 (IFDLFHFGH) and lysine 66. Residues lysine 66 and tryptophan 95 each contribute to the substrate site. CTP is bound by residues 112 to 113 (HD), tyrosine 117, and 142 to 146 (RTEGI). The disordered stretch occupies residues 266 to 292 (QNGLTISKDNDDEQMSDDNEFAEEDCV). Residues 275 to 291 (NDDEQMSDDNEFAEEDC) are compositionally biased toward acidic residues.

Belongs to the cytidylyltransferase family.

It catalyses the reaction phosphocholine + CTP + H(+) = CDP-choline + diphosphate. It functions in the pathway phospholipid metabolism; phosphatidylcholine biosynthesis; phosphatidylcholine from phosphocholine: step 1/2. Plays an important role in the biosynthesis of the phospholipid phosphatidylcholine. Catalyzes the formation of CDP-choline. In Arabidopsis thaliana (Mouse-ear cress), this protein is Choline-phosphate cytidylyltransferase 2.